The chain runs to 2368 residues: Voltage-dependent P/Q-type calcium channel subunit alpha-1A (2368 aa).

Residues 1–100 (MARFGDEMPG…KYAKKITEWP (100 aa)) are Cytoplasmic-facing. Residues 65–365 (NPIPVRQNCL…LVLGVLSGEF (301 aa)) form an I repeat. A helical transmembrane segment spans residues 101–119 (PFEYMILATIIANCIVLAL). Residues 120 to 138 (EQHLPDDDKTPMSERLDDT) lie on the Extracellular side of the membrane. A helical membrane pass occupies residues 139–156 (EPYFIGIFCFEAGIKIVA). Residues 157–168 (LGFAFHKGSYLR) are Cytoplasmic-facing. Residues 169–184 (NGWNVMDFVVVLTGIL) form a helical membrane-spanning segment. The Extracellular segment spans residues 185–192 (ATVGTEFD). The chain crosses the membrane as a helical span at residues 193-211 (LRTLRAVRVLRPLKLVSGI). Topologically, residues 212–230 (PSLQVVLKSIMKAMIPLLQ) are cytoplasmic. A helical membrane pass occupies residues 231–250 (IGLLLFFAILIFAIIGLEFY). Residues 251–337 (MGKFHTTCFE…NSNDASGNTW (87 aa)) are Extracellular-facing. A glycan (N-linked (GlcNAc...) asparagine) is linked at N285. E320 is a binding site for Ca(2+). The helical transmembrane segment at 338–362 (NWLYFIPLIIIGSFFMLNLVLGVLS) threads the bilayer. Over 363–489 (GEFAKERERV…FYIRRMVKTQ (127 aa)) the chain is Cytoplasmic. A binding to the beta subunit region spans residues 385 to 402 (QQIERELNGYMEWISKAE). T411 carries the post-translational modification Phosphothreonine. Phosphoserine is present on residues S450 and S453. The II repeat unit spans residues 475–719 (ERRMRFYIRR…VFLAIAVDNL (245 aa)). Residues 490–509 (AFYWTVLSLVALNTLCVAIV) traverse the membrane as a helical segment. At 510-523 (HYNQPEWLSDFLYY) the chain is on the extracellular side. Residues 524-543 (AEFIFLGLFMSEMFIKMYGL) form a helical membrane-spanning segment. The Cytoplasmic segment spans residues 544-551 (GTRPYFHS). Residues 552-570 (SFNCFDCGVIIGSIFEVIW) traverse the membrane as a helical segment. Over 571-580 (AVIKPGTSFG) the chain is Extracellular. A helical membrane pass occupies residues 581–599 (ISVLRALRLLRIFKVTKYW). Residues 600 to 618 (ASLRNLVVSLLNSMKSIIS) lie on the Cytoplasmic side of the membrane. A helical membrane pass occupies residues 619 to 638 (LLFLLFLFIVVFALLGMQLF). Over 639 to 691 (GGQFNFDEGTPPTNFDTFPAAIMTVFQILTGEDWNEVMYDGIKSQGGVQGGMV) the chain is Extracellular. Ca(2+) is bound at residue E670. The helical transmembrane segment at 692 to 716 (FSIYFIVLTLFGNYTLLNVFLAIAV) threads the bilayer. The Cytoplasmic portion of the chain corresponds to 717–1190 (DNLANAQELT…TNPLRRLCHY (474 aa)). Residues S752 and S755 each carry the phosphoserine modification. The interval 762-781 (AVKEQQKNQKPTKSVWEQRT) is disordered. Residues 769–779 (NQKPTKSVWEQ) show a composition bias toward polar residues. Residue S792 is modified to Phosphoserine. Disordered stretches follow at residues 823–1117 (PLVV…RKPE) and 1137–1170 (VNKN…KPMP). Basic and acidic residues-rich tracts occupy residues 850–862 (RPRE…DARR), 871–924 (APGR…EGEP), and 932–958 (RPGD…RAAD). Phosphoserine is present on residues S1038, S1042, and S1051. The segment covering 1056 to 1073 (GNSTNPGPALATNPQNAA) has biased composition (polar residues). Residues 1074-1083 (SRRTPNNPGN) are compositionally biased toward low complexity. Polar residues predominate over residues 1094-1111 (ENSLIVTNPSSTQPNSAK). Residues 1153 to 1163 (KKEEEEADPGE) show a composition bias toward acidic residues. The stretch at 1182–1465 (NPLRRLCHYI…IFVALIIITF (284 aa)) is one III repeat. The helical transmembrane segment at 1191 to 1214 (ILNLRYFEMCILMVIAMSSIALAA) threads the bilayer. The Extracellular portion of the chain corresponds to 1215 to 1231 (EDPVQPNAPRNNVLRYF). Residues 1232-1251 (DYVFTGVFTFEMVIKMIDLG) form a helical membrane-spanning segment. Residues 1252–1258 (LVLHQGA) lie on the Cytoplasmic side of the membrane. The helical transmembrane segment at 1259 to 1282 (YFRDLWNILDFIVVSGALVAFAFT) threads the bilayer. Over 1283-1293 (GNSKGKDINTI) the chain is Extracellular. A helical transmembrane segment spans residues 1294–1311 (KSLRVLRVLRPLKTIKRL). Topologically, residues 1312–1330 (PKLKAVFDCVVNSLKNVFN) are cytoplasmic. The helical transmembrane segment at 1331–1350 (ILIVYMLFMFIFAVVAVQLF) threads the bilayer. At 1351-1437 (KGKFFHCTDE…QGPSPGYRME (87 aa)) the chain is on the extracellular side. Residue E1411 coordinates Ca(2+). Residues 1438–1462 (MSIFYVVYFVVFPFFFVNIFVALII) traverse the membrane as a helical segment. At 1463-1518 (ITFQEQGDKMMEEYSLEKNERACIDFAISAKPLTRHMPQNKQSFQYRMWQFVVSPP) the chain is on the cytoplasmic side. Residues 1502–1765 (NKQSFQYRMW…LFVAVIMDNF (264 aa)) form an IV repeat. The chain crosses the membrane as a helical span at residues 1519-1537 (FEYTIMAMIALNTIVLMMK). Residues 1538–1551 (FYGASVAYENALRV) lie on the Extracellular side of the membrane. A helical membrane pass occupies residues 1552-1573 (FNIVFTSLFSLECVLKVMAFGI). Topologically, residues 1574–1580 (LNYFRDA) are cytoplasmic. A helical transmembrane segment spans residues 1581–1600 (WNIFDFVTVLGSITDILVTE). At 1601–1607 (FGNNFIN) the chain is on the extracellular side. N1607 carries N-linked (GlcNAc...) asparagine glycosylation. Residues 1608-1626 (LSFLRLFRAARLIKLLRQG) traverse the membrane as a helical segment. At 1627–1645 (YTIRILLWTFVQSFKALPY) the chain is on the cytoplasmic side. The helical transmembrane segment at 1646 to 1665 (VCLLIAMLFFIYAIIGMQVF) threads the bilayer. Residues 1666 to 1737 (GNIGIDGEDE…ILTADCGNEF (72 aa)) lie on the Extracellular side of the membrane. The helical transmembrane segment at 1738–1763 (AYFYFVSFIFLCSFLMLNLFVAVIMD) threads the bilayer. Residues 1764 to 2368 (NFEYLTRDSS…AYSESEDDWC (605 aa)) lie on the Cytoplasmic side of the membrane. A Phosphothreonine modification is found at T1935. The segment at 1940–2368 (QRMEPPSPTQ…AYSESEDDWC (429 aa)) is disordered. Composition is skewed to polar residues over residues 1948 to 1963 (TQEG…STQL) and 1981 to 1997 (SWVT…TGTW). Phosphoserine is present on residues S1998, S2016, S2028, S2030, S2071, and S2091. Polar residues predominate over residues 2008–2017 (PNSQPNSQSV). Positions 2018 to 2034 (EMREMGTDGYSDSEHYL) are enriched in basic and acidic residues. Positions 2063 to 2073 (DLSTISDTSPM) are enriched in polar residues. Basic and acidic residues-rich tracts occupy residues 2085 to 2102 (RRLD…ENQR) and 2143 to 2153 (PSKDRDQDRGR). Residues 2154–2172 (PKDRKHRPHHHHHHHHHHP) are compositionally biased toward basic residues. Positions 2173–2209 (PAPDRDRYAQERPDTGRARAREQRWSRSPSEGREHTT) are enriched in basic and acidic residues. Low complexity predominate over residues 2213 to 2231 (GSSSVSGSPAPSTSGTSTP). The segment covering 2289–2305 (EGPRPRGADYTEPDSPR) has biased composition (basic and acidic residues).

Belongs to the calcium channel alpha-1 subunit (TC 1.A.1.11) family. CACNA1A subfamily. In terms of assembly, voltage-dependent calcium channels are multisubunit complexes, consisting of alpha-1, alpha-2, beta and delta subunits in a 1:1:1:1 ratio. The channel activity is directed by the pore-forming and voltage-sensitive alpha-1 subunit. In many cases, this subunit is sufficient to generate voltage-sensitive calcium channel activity. The auxiliary subunits beta and alpha-2/delta linked by a disulfide bridge regulate the channel activity. Interacts with CABP1. Interacts with the spider omega-agatoxin-IVA (AC P30288). Interacts with TSPOAP1. In terms of tissue distribution, brain specific; mainly found in the cerebellum, olfactory bulb, cerebral cortex, hippocampus, and inferior colliculus. In the hippocampus, expression occurs in pyramidal and granule neurons, as well as in interneurons. Purkinje cells contain predominantly P-type VSCC, the Q-type being a prominent calcium current in cerebellar granule cells.

The protein resides in the cell membrane. The enzyme catalyses Ca(2+)(in) = Ca(2+)(out). Its function is as follows. Voltage-sensitive calcium channels (VSCC) mediate the entry of calcium ions into excitable cells and are also involved in a variety of calcium-dependent processes, including muscle contraction, hormone or neurotransmitter release, gene expression, cell motility, cell division and cell death. The isoform alpha-1A gives rise to P and/or Q-type calcium currents. P/Q-type calcium channels belong to the 'high-voltage activated' (HVA) group and are specifically blocked by the spider omega-agatoxin-IVA (AC P54282). They are however insensitive to dihydropyridines (DHP). The sequence is that of Voltage-dependent P/Q-type calcium channel subunit alpha-1A from Mus musculus (Mouse).